Here is a 253-residue protein sequence, read N- to C-terminus: 3-deoxy-manno-octulosonate cytidylyltransferase (253 aa).

The protein belongs to the KdsB family.

Its subcellular location is the cytoplasm. The enzyme catalyses 3-deoxy-alpha-D-manno-oct-2-ulosonate + CTP = CMP-3-deoxy-beta-D-manno-octulosonate + diphosphate. It functions in the pathway nucleotide-sugar biosynthesis; CMP-3-deoxy-D-manno-octulosonate biosynthesis; CMP-3-deoxy-D-manno-octulosonate from 3-deoxy-D-manno-octulosonate and CTP: step 1/1. The protein operates within bacterial outer membrane biogenesis; lipopolysaccharide biosynthesis. Activates KDO (a required 8-carbon sugar) for incorporation into bacterial lipopolysaccharide in Gram-negative bacteria. This is 3-deoxy-manno-octulosonate cytidylyltransferase from Neisseria meningitidis serogroup B (strain ATCC BAA-335 / MC58).